The chain runs to 214 residues: uncharacterized protein (214 aa).

2 helical membrane-spanning segments follow: residues isoleucine 19–leucine 39 and leucine 50–glycine 70.

The protein resides in the cell membrane. This is an uncharacterized protein from Methanocaldococcus jannaschii (strain ATCC 43067 / DSM 2661 / JAL-1 / JCM 10045 / NBRC 100440) (Methanococcus jannaschii).